A 474-amino-acid chain; its full sequence is Melanopsin (474 aa).

Topologically, residues 1–72 (MNSPSESRVP…VDVPDHAHYT (72 aa)) are extracellular. Asn-31 and Asn-35 each carry an N-linked (GlcNAc...) asparagine glycan. A helical transmembrane segment spans residues 73 to 93 (LGTVILLVGLTGMLGNLTVIY). At 94-107 (TFCRNRGLRTPANM) the chain is on the cytoplasmic side. A helical membrane pass occupies residues 108–128 (LIINLAVSDFLMSFTQAPVFF). The Extracellular segment spans residues 129-144 (ASSLYKKWLFGETGCK). Cysteines 143 and 221 form a disulfide. The chain crosses the membrane as a helical span at residues 145 to 165 (FYAFCGAVFGIVSMITLTAIA). At 166–188 (MDRYLVITRPLATIGMRSKRRTA) the chain is on the cytoplasmic side. The chain crosses the membrane as a helical span at residues 189–209 (LVLLGVWLYALAWSLPPFFGW). The Extracellular segment spans residues 210–238 (SAYVPEGLLTSCSWDYVTFTPLVRAYTML). A helical transmembrane segment spans residues 239–259 (LFCFVFFLPLLIIIFCYIFIF). At 260-293 (RAIRETGRACEGCGESPLRRRQWQRLQSEWKMAK) the chain is on the cytoplasmic side. The helical transmembrane segment at 294–314 (VALIVILLFVLSWAPYSTVAL) threads the bilayer. Residues 315-355 (VGFAGYSHILTPYMSSVPAVIAKASAIHNPIIYAITHPKYR) are Extracellular-facing. Lys-337 is modified (N6-(retinylidene)lysine). The chain crosses the membrane as a helical span at residues 356-372 (AAIAQHLPCLGVLLGVS). Topologically, residues 373-474 (GQRSHPSLSY…RHLPSLDRRM (102 aa)) are cytoplasmic. The interval 428–474 (AAQQASGQSFCSHDLEDGEVKAPSSPQEQKSKTPKTKRHLPSLDRRM) is disordered.

It belongs to the G-protein coupled receptor 1 family. Opsin subfamily. As to expression, eye; expressed in a photosensitive subset of retinal ganglion cells (at protein level).

Its subcellular location is the cell membrane. The protein resides in the cell projection. It is found in the axon. It localises to the dendrite. The protein localises to the perikaryon. Photoreceptor that binds cis-retinaldehydes. Contributes to pupillar reflex, photoentrainment and other non-image forming responses to light. May be involved in the optokinetic visual tracking response. May be involved in the regulation of retinal hyaloid vessel growth and regression. The sequence is that of Melanopsin from Rattus norvegicus (Rat).